The primary structure comprises 782 residues: Protein phosphatase 1 regulatory subunit 12C (782 aa).

2 stretches are compositionally biased toward low complexity: residues 1 to 19 (MSGE…AAAA) and 77 to 88 (DPGPGSGAASDP). Disordered regions lie at residues 1–45 (MSGE…GERR) and 77–98 (DPGP…RAVL). An N-acetylserine modification is found at Ser-2. 4 ANK repeats span residues 104-133 (DGIS…TVNQ), 137-166 (EGWT…NIAA), 230-259 (TGAS…DTEL), and 263-292 (DGWT…GMDS). The stretch at 301–332 (CDLADEDVMNLLEELAQKQEDLRNQKEGSQGR) forms a coiled coil. The tract at residues 321-685 (DLRNQKEGSQ…HEEPDGGFRK (365 aa)) is disordered. Polar residues predominate over residues 332–341 (RGQESQVPSS). Residues 353–369 (SSREKISLQDLSKERRP) are compositionally biased toward basic and acidic residues. A compositionally biased stretch (low complexity) spans 401–413 (VSSPVSSNPKSPV). 5 positions are modified to phosphoserine: Ser-403, Ser-411, Ser-431, Ser-454, and Ser-509. Over residues 451 to 465 (RSASSSLLEKASTQA) the composition is skewed to polar residues. Residues 537–546 (VRDEESESQR) are compositionally biased toward basic and acidic residues. Over residues 547–557 (KARSRLMRQSR) the composition is skewed to basic residues. At Thr-560 the chain carries Phosphothreonine. Phosphoserine is present on Ser-647. Basic and acidic residues predominate over residues 664-685 (SQRDLVLESKQEHEEPDGGFRK). The stretch at 681-782 (GGFRKMYTEL…LIRVISKLSK (102 aa)) forms a coiled coil.

In terms of assembly, PP1 comprises a catalytic subunit, PPP1CA, PPP1CB or PPP1CC, and one or several targeting or regulatory subunits. PPP1R12C mediates binding to myosin. Interacts via its N-terminus with PPP1CB. Interacts with IL16. Interacts with the coiled-coil domain of MPRIP. Interacts with NOD2. Post-translationally, phosphorylation at Thr-560 is essential for its interaction with PPP1CB.

Its subcellular location is the cytoplasm. The protein resides in the cytoskeleton. The protein localises to the stress fiber. Functionally, regulates myosin phosphatase activity. This Mus musculus (Mouse) protein is Protein phosphatase 1 regulatory subunit 12C.